Consider the following 231-residue polypeptide: Ribosomal RNA small subunit methyltransferase nep-1 (231 aa).

Residues Met161, Gly188, Gly193, and 206-211 (ISNYPL) contribute to the S-adenosyl-L-methionine site.

Belongs to the class IV-like SAM-binding methyltransferase superfamily. RNA methyltransferase NEP1 family. Homodimer.

It is found in the nucleus. It localises to the nucleolus. It carries out the reaction a pseudouridine in rRNA + S-adenosyl-L-methionine = an N(1)-methylpseudouridine in rRNA + S-adenosyl-L-homocysteine + H(+). S-adenosyl-L-methionine-dependent pseudouridine N(1)-methyltransferase that methylates a pseudouridine in 18S rRNA. Involved the biosynthesis of the hypermodified N1-methyl-N3-(3-amino-3-carboxypropyl) pseudouridine (m1acp3-Psi) conserved in eukaryotic 18S rRNA. Also has an essential role in 40S ribosomal subunit biogenesis independent on its methyltransferase activity, facilitating the incorporation of ribosomal protein S19 during the formation of pre-ribosomes. This is Ribosomal RNA small subunit methyltransferase nep-1 from Caenorhabditis elegans.